Here is a 144-residue protein sequence, read N- to C-terminus: Large ribosomal subunit protein uL16 (144 aa).

Residues 1–17 show a composition bias toward basic residues; it reads MLQPKKTKFRRQQKGRA. Residues 1–22 form a disordered region; sequence MLQPKKTKFRRQQKGRAKGNAQ.

This sequence belongs to the universal ribosomal protein uL16 family. As to quaternary structure, part of the 50S ribosomal subunit.

Functionally, binds 23S rRNA and is also seen to make contacts with the A and possibly P site tRNAs. This chain is Large ribosomal subunit protein uL16, found in Bacteroides thetaiotaomicron (strain ATCC 29148 / DSM 2079 / JCM 5827 / CCUG 10774 / NCTC 10582 / VPI-5482 / E50).